A 216-amino-acid chain; its full sequence is UPF0548 protein (216 aa).

This sequence belongs to the UPF0548 family.

The protein is UPF0548 protein of Dictyostelium discoideum (Social amoeba).